Consider the following 827-residue polypeptide: Glycerol-3-phosphate acyltransferase (827 aa).

The short motif at 325–330 (CHRSHM) is the HXXXXD motif element.

This sequence belongs to the GPAT/DAPAT family.

It localises to the cell inner membrane. The catalysed reaction is sn-glycerol 3-phosphate + an acyl-CoA = a 1-acyl-sn-glycero-3-phosphate + CoA. It participates in phospholipid metabolism; CDP-diacylglycerol biosynthesis; CDP-diacylglycerol from sn-glycerol 3-phosphate: step 1/3. The chain is Glycerol-3-phosphate acyltransferase from Shigella flexneri serotype 5b (strain 8401).